The sequence spans 362 residues: Beta-ketoacyl-[acyl-carrier-protein] synthase III 2 (362 aa).

Active-site residues include Cys-113 and His-251. The segment at 252–256 (QANIR) is ACP-binding. Asn-281 is a catalytic residue.

The protein belongs to the thiolase-like superfamily. FabH family. As to quaternary structure, homodimer.

The protein localises to the cytoplasm. It catalyses the reaction malonyl-[ACP] + acetyl-CoA + H(+) = 3-oxobutanoyl-[ACP] + CO2 + CoA. The protein operates within lipid metabolism; fatty acid biosynthesis. Its function is as follows. Catalyzes the condensation reaction of fatty acid synthesis by the addition to an acyl acceptor of two carbons from malonyl-ACP. Catalyzes the first condensation reaction which initiates fatty acid synthesis and may therefore play a role in governing the total rate of fatty acid production. Possesses both acetoacetyl-ACP synthase and acetyl transacylase activities. Its substrate specificity determines the biosynthesis of branched-chain and/or straight-chain of fatty acids. The protein is Beta-ketoacyl-[acyl-carrier-protein] synthase III 2 of Vibrio cholerae serotype O1 (strain ATCC 39315 / El Tor Inaba N16961).